The chain runs to 174 residues: Protein FanG (174 aa).

The N-terminal stretch at 1-21 (MKKLYKAITVICILMSNLQSA) is a signal peptide. Cysteine 41 and cysteine 75 are joined by a disulfide.

The protein localises to the fimbrium. Its function is as follows. Involved in the biosynthesis of K99 fimbriae. The protein is Protein FanG (fanG) of Escherichia coli.